The chain runs to 89 residues: MSLSSERKVQVIKEHQCSVNDTGSPEVQVALLSERITQLSGHFKQHTHDHHSRQGLLRAVGQRRKLLDYLKKKDLDRYRTLINKLGLRR.

The protein belongs to the universal ribosomal protein uS15 family. In terms of assembly, part of the 30S ribosomal subunit. Forms a bridge to the 50S subunit in the 70S ribosome, contacting the 23S rRNA.

In terms of biological role, one of the primary rRNA binding proteins, it binds directly to 16S rRNA where it helps nucleate assembly of the platform of the 30S subunit by binding and bridging several RNA helices of the 16S rRNA. Forms an intersubunit bridge (bridge B4) with the 23S rRNA of the 50S subunit in the ribosome. The polypeptide is Small ribosomal subunit protein uS15 (Nitrosococcus oceani (strain ATCC 19707 / BCRC 17464 / JCM 30415 / NCIMB 11848 / C-107)).